The primary structure comprises 499 residues: Glucose-6-phosphate isomerase (499 aa).

Residue glutamate 352 is the Proton donor of the active site. Residues histidine 383 and lysine 487 contribute to the active site.

Belongs to the GPI family.

It is found in the cytoplasm. It catalyses the reaction alpha-D-glucose 6-phosphate = beta-D-fructose 6-phosphate. The protein operates within carbohydrate biosynthesis; gluconeogenesis. Its pathway is carbohydrate degradation; glycolysis; D-glyceraldehyde 3-phosphate and glycerone phosphate from D-glucose: step 2/4. Catalyzes the reversible isomerization of glucose-6-phosphate to fructose-6-phosphate. The protein is Glucose-6-phosphate isomerase of Legionella pneumophila (strain Lens).